The primary structure comprises 146 residues: Leghemoglobin Lb120-8 (146 aa).

A Globin domain is found at G2–N146. 2 positions are modified to nitrated tyrosine: Y24 and Y29. S44 is a binding site for heme b. Residue S44 is modified to Phosphoserine. H61 is a binding site for O2. Heme b is bound by residues K64, H93, and K96. Y134 carries the nitrated tyrosine modification.

The protein belongs to the plant globin family. As to quaternary structure, monomer. Post-translationally, nitrated in effective nodules and particularly in hypoxic conditions; this mechanism may play a protective role in the symbiosis by buffering toxic peroxynitrite NO(2)(-). Nitration level decrease during nodule senescence. Phosphorylation at Ser-44 disrupts the molecular environment of its porphyrin ring oxygen binding pocket, thus leading to a reduced oxygen consumption and to the delivery of oxygen O(2) to symbiosomes. As to expression, root nodules.

It localises to the cytoplasm. The protein resides in the cytosol. It is found in the nucleus. Its function is as follows. Leghemoglobin that reversibly binds oxygen O(2) through a pentacoordinated heme iron. In root nodules, facilitates the diffusion of oxygen to the bacteroids while preventing the bacterial nitrogenase from being inactivated by buffering dioxygen, nitric oxide and carbon monoxide, and promoting the formation of reactive oxygen species (ROS, e.g. H(2)O(2)). This role is essential for symbiotic nitrogen fixation (SNF). This Pisum sativum (Garden pea) protein is Leghemoglobin Lb120-8.